A 294-amino-acid chain; its full sequence is MTAQSSFLQLNSIFISILIEAIPFILIGVILSGIIQMFVSEEMIARIMPKNRFLAVLFGALAGVLFPACECGIIPITRRLLLKGVPLHAGVAFMLTAPIINPIVLFSTYIAFGNRWSVVFYRGGLALAVSLIIGVILSYQFKDNQLLKPDEPGHHHHHHGTLLQKLGGTLRHAIDEFFSVGKYLIIGAFIAAAMQTYVKTSTLLAIGQNDVSSSLVMMGLAFVLSLCSEVDAFIASSFSSTFSLGSLIAFLVFGAMVDIKNLLMMLAAFKKRFVFLLITYIVVIVLAGSLLVKG.

8 helical membrane passes run 15-35, 54-74, 92-112, 117-137, 174-194, 215-235, 247-267, and 273-293; these read ISIL…SGII, LAVL…CGII, AFML…YIAF, SVVF…GVIL, IDEF…AAAM, LVMM…AFIA, LIAF…MMLA, and FVFL…LLVK.

The protein belongs to the UPF0718 family.

The protein localises to the cell membrane. This is UPF0718 protein YcgR (ycgR) from Bacillus subtilis (strain 168).